A 276-amino-acid polypeptide reads, in one-letter code: MTTWYFLNSGKCSPSFNMALDEALLDWHSEGLIPPVIRFYEWEPATLSIGYFQQAKKDINLDAVREQGLGFVRRPTGGRAVLHEHELTYSVIVTESYPDMPESVTEAYRVLSEGILQGFHNLGMDAYFSVPDTEEKRADLKSPKSAVCFDAPSWYELVVEGKKIAGSAQTRQKGVILQHGAILLDLDQEKLLSVFNFSSEEAKDRMRRKLPEKAVAINSLVDEPVTVEQCVTAFRDGFAKSLQIELKPFTLSEEQLEYVRALEEKKYACDEWNFKK.

Residues glycine 31 to leucine 246 form the BPL/LPL catalytic domain. Cysteine 148 functions as the Acyl-thioester intermediate in the catalytic mechanism.

The protein belongs to the octanoyltransferase LipM family. In terms of assembly, monomer.

It carries out the reaction octanoyl-[ACP] + L-lysyl-[protein] = N(6)-octanoyl-L-lysyl-[protein] + holo-[ACP] + H(+). Its pathway is protein modification; protein lipoylation via endogenous pathway; protein N(6)-(lipoyl)lysine from octanoyl-[acyl-carrier-protein]. Functionally, catalyzes the transfer of endogenously produced octanoic acid from octanoyl-acyl-carrier-protein onto the lipoyl domain of GcvH, an intermediate carrier during protein lipoylation. The protein is Octanoyltransferase LipM of Lysinibacillus sphaericus (strain C3-41).